The primary structure comprises 776 residues: Cullin-1 (776 aa).

Residue Arg63 is modified to Omega-N-methylarginine. In terms of domain architecture, Cullin neddylation spans 706–766 (DRKLLIQAAI…IEKEYLERVD (61 aa)). Lys720 is covalently cross-linked (Glycyl lysine isopeptide (Lys-Gly) (interchain with G-Cter in NEDD8)).

This sequence belongs to the cullin family. In terms of assembly, component of multiple Cul1-RING E3 ubiquitin-protein ligase complexes commonly known as SCF (SKP1-CUL1-F-box) complexes, consisting of CUL1, SKP1, RBX1 and a variable F-box domain-containing protein as substrate-specific subunit. Component of the SCF(FBXW11) complex containing FBXW11. Component of the SCF(SKP2) complex containing SKP2, in which it interacts directly with SKP1, SKP2 and RBX1. Component of the SCF(FBXW2) complex containing FBXW2. Component of the SCF(FBXO32) complex containing FBXO32. Component of the probable SCF(FBXO7) complex containing FBXO7. Component of the SCF(FBXO10) complex containing FBXO10. Component of the SCF(FBXO11) complex containing FBXO11. Component of the SCF(FBXO25) complex containing FBXO25. Component of the SCF(FBXO33) complex containing FBXO33. Component of the probable SCF(FBXO4) complex containing FBXO4. Component of the SCF(FBXO44) complex, composed of SKP1, CUL1 and FBXO44. Component of the SCF(BTRC) complex, composed of SKP1, CUL1 and BTRC. This complex binds phosphorylated NFKBIA. Part of a SCF complex consisting of CUL1, RBX1, SKP1 and FBXO2. Component of a SCF(SKP2)-like complex containing CUL1, SKP1, TRIM21 and SKP2. Component of the SCF(FBXO17) complex, composed of SKP1, CUL1 and FBXO17. Component of the SCF(FBXO27) complex, composed of SKP1, CUL1 and FBXO27. Component of the SCF(CCNF) complex consisting of CUL1, RBX1, SKP1 and CCNF. Interacts with CCNF. Component of the SCF(FBXL3) complex composed of CUL1, SKP1, RBX1 and FBXL3. Component of the SCF(FBXL21) complex composed of CUL1, SKP1, RBX1 and FBXL21. Component of the SCF(FBXO9) composed of CUL1, SKP1, RBX1 and FBXO9. Component of the SCF(FBXW7) composed of CUL1, SKP1, RBX1 and FBXW7. Component of the SCF(FBXO31) complex composed of CUL1, SKP1, RBX1 and FBXO31. Interacts with CHEK2; mediates CHEK2 ubiquitination and regulates its function. Part of a complex with TIP120A/CAND1 and RBX1. The unneddylated form interacts with TIP120A/CAND1 and the interaction mediates the exchange of the F-box substrate-specific subunit. Can self-associate. Interacts with FBXW8. Interacts with RNF7. Interacts with TRIM21. Interacts with COPS2. Interacts with UBE2M. Identified in a complex with RBX1 and GLMN. Interacts with CEP68 as part of the SCF(FBXW11) complex; the interaction is probably mediated by FBXW11 and the complex also contains CDK5RAP2 and PCNT. Interacts (when neddylated) with ARIH1; leading to activate the E3 ligase activity of ARIH1. Interacts with COPS9 isoform 2. Interacts with UBXN1. Interacts with KAT7, probably as part of an SCF complex; the interaction mediates KAT7 ubiquitination. Interacts with NOTCH2. Part of a complex that contains DCUN1D5, CUL1 and RBX1; this complex is bridged by CUL1. Interacts (unneddylated form) with DCUN1D1, DCUN1D2, DCUN1D3, DCUN1D4 and DCUN1D5; these interactions promote the cullin neddylation. Interacts (via the C-terminal domain) with CUL7; the interaction seems to be mediated by FBXW8; it is likely specific to FBXW8, but not other F-box proteins. Interacts with UBR2, as part of SCF(BTRC) complex; the interaction mediates 'Lys-48'-linked ubiquitination of UBR2 and is regulated by DUSP22 in the T-cell receptor signaling pathway. As to quaternary structure, (Microbial infection) Interacts with Epstein-Barr virus BPLF1. (Microbial infection) Interacts with Human adenovirus early E1A protein; this interaction inhibits RBX1-CUL1-dependent elongation reaction of ubiquitin chains by the SCF(FBXW7) complex. In terms of assembly, (Microbial infection) Interacts with vaccinia virus protein C9L. As to quaternary structure, (Microbial infection) Interacts with Epstein-Barr virus (EBV) tegument protein BGLF2; this interaction might facilitate CUL1 recruitment to STAT2, leading to ubiquitination and degradation of the latter. Neddylated; which enhances the ubiquitination activity of SCF. Neddylation prevents binding of the inhibitor CAND1. Neddylation leads to structural rearrangment in the complex that allows interaction between the E2 ubiquitin-conjugating enzyme and the acceptor ubiquitin. Deneddylated via its interaction with the COP9 signalosome (CSN) complex. In terms of processing, (Microbial infection) Deneddylated by Epstein-Barr virus BPLF1 leading to a S-phase-like environment that is required for efficient replication of the viral genome. As to expression, expressed in lung fibroblasts.

The protein operates within protein modification; protein ubiquitination. Its function is as follows. Core component of multiple cullin-RING-based SCF (SKP1-CUL1-F-box protein) E3 ubiquitin-protein ligase complexes, which mediate the ubiquitination of proteins involved in cell cycle progression, signal transduction and transcription. SCF complexes and ARIH1 collaborate in tandem to mediate ubiquitination of target proteins. In the SCF complex, serves as a rigid scaffold that organizes the SKP1-F-box protein and RBX1 subunits. May contribute to catalysis through positioning of the substrate and the ubiquitin-conjugating enzyme. The E3 ubiquitin-protein ligase activity of the complex is dependent on the neddylation of the cullin subunit and exchange of the substrate recognition component is mediated by TIP120A/CAND1. The functional specificity of the SCF complex depends on the F-box protein as substrate recognition component. SCF(BTRC) and SCF(FBXW11) direct ubiquitination of CTNNB1 and participate in Wnt signaling. SCF(FBXW11) directs ubiquitination of phosphorylated NFKBIA. SCF(BTRC) directs ubiquitination of NFKBIB, NFKBIE, ATF4, SMAD3, SMAD4, CDC25A, FBXO5 and probably NFKB2. SCF(BTRC) and/or SCF(FBXW11) direct ubiquitination of CEP68. SCF(SKP2) directs ubiquitination of phosphorylated CDKN1B/p27kip and is involved in regulation of G1/S transition. SCF(SKP2) directs ubiquitination of ORC1, CDT1, RBL2, ELF4, CDKN1A, RAG2, FOXO1A, and probably MYC and TAL1. SCF(FBXW7) directs ubiquitination of CCNE1, NOTCH1 released notch intracellular domain (NICD), and probably PSEN1. SCF(FBXW2) directs ubiquitination of GCM1. SCF(FBXO32) directs ubiquitination of MYOD1. SCF(FBXO7) directs ubiquitination of BIRC2 and DLGAP5. SCF(FBXO33) directs ubiquitination of YBX1. SCF(FBXO1) directs ubiquitination of BCL6 and DTL but does not seem to direct ubiquitination of TP53. SCF(BTRC) mediates the ubiquitination of NFKBIA at 'Lys-21' and 'Lys-22'; the degradation frees the associated NFKB1-RELA dimer to translocate into the nucleus and to activate transcription. SCF(CCNF) directs ubiquitination of CCP110. SCF(FBXL3) and SCF(FBXL21) direct ubiquitination of CRY1 and CRY2. SCF(FBXO9) directs ubiquitination of TTI1 and TELO2. SCF(FBXO10) directs ubiquitination of BCL2. Neddylated CUL1-RBX1 ubiquitinates p53/TP53 recruited by Cul7-RING(FBXW8) complex. SCF(BTRC) directs 'Lys-48'-linked ubiquitination of UBR2 in the T-cell receptor signaling pathway. The SCF(FBXO31) protein ligase complex specifically mediates the ubiquitination of proteins amidated at their C-terminus in response to oxidative stress. This chain is Cullin-1 (CUL1), found in Homo sapiens (Human).